Reading from the N-terminus, the 179-residue chain is Bifunctional protein PyrR (179 aa).

The short motif at 97 to 109 (VILIDDVLFTGRT) is the PRPP-binding element.

It belongs to the purine/pyrimidine phosphoribosyltransferase family. PyrR subfamily.

It catalyses the reaction UMP + diphosphate = 5-phospho-alpha-D-ribose 1-diphosphate + uracil. Regulates the transcription of the pyrimidine nucleotide (pyr) operon in response to exogenous pyrimidines. Functionally, also displays a weak uracil phosphoribosyltransferase activity which is not physiologically significant. This chain is Bifunctional protein PyrR, found in Actinobacillus pleuropneumoniae serotype 5b (strain L20).